The chain runs to 138 residues: Acidic phospholipase A2 (138 aa).

The first 16 residues, 1–16 (MRTLWIVAVLLLGVEG), serve as a signal peptide directing secretion. Intrachain disulfides connect cysteine 42–cysteine 131, cysteine 44–cysteine 60, cysteine 59–cysteine 111, cysteine 65–cysteine 138, cysteine 66–cysteine 104, cysteine 73–cysteine 97, and cysteine 91–cysteine 102. Residues tyrosine 43, glycine 45, and glycine 47 each contribute to the Ca(2+) site. Histidine 63 is an active-site residue. Residue aspartate 64 participates in Ca(2+) binding. The active site involves aspartate 105.

It belongs to the phospholipase A2 family. Group II subfamily. D49 sub-subfamily. Homodimer. Requires Ca(2+) as cofactor. As to expression, expressed by the venom gland.

The protein resides in the secreted. The enzyme catalyses a 1,2-diacyl-sn-glycero-3-phosphocholine + H2O = a 1-acyl-sn-glycero-3-phosphocholine + a fatty acid + H(+). Functionally, PLA2 catalyzes the calcium-dependent hydrolysis of the 2-acyl groups in 3-sn-phosphoglycerides. This Crotalus atrox (Western diamondback rattlesnake) protein is Acidic phospholipase A2.